A 265-amino-acid polypeptide reads, in one-letter code: Mlc titration factor A (265 aa).

4 residues coordinate Zn(2+): His111, His148, His152, and Glu211.

This sequence belongs to the MtfA family. Interacts with Mlc. The cofactor is Zn(2+).

The protein localises to the cytoplasm. Functionally, involved in the modulation of the activity of the glucose-phosphotransferase system (glucose-PTS). Interacts with the transcriptional repressor Mlc, preventing its interaction with DNA and leading to the modulation of expression of genes regulated by Mlc, including ptsG, which encodes the PTS system glucose-specific EIICB component. Shows zinc-dependent metallopeptidase activity. This Escherichia coli (strain 55989 / EAEC) protein is Mlc titration factor A.